Reading from the N-terminus, the 98-residue chain is NADH-ubiquinone oxidoreductase chain 4L (98 aa).

3 helical membrane passes run Pro2–Phe22, Met37–Phe57, and Ile61–Val81.

The protein belongs to the complex I subunit 4L family. In terms of assembly, core subunit of respiratory chain NADH dehydrogenase (Complex I) which is composed of 45 different subunits.

It is found in the mitochondrion inner membrane. It carries out the reaction a ubiquinone + NADH + 5 H(+)(in) = a ubiquinol + NAD(+) + 4 H(+)(out). In terms of biological role, core subunit of the mitochondrial membrane respiratory chain NADH dehydrogenase (Complex I) which catalyzes electron transfer from NADH through the respiratory chain, using ubiquinone as an electron acceptor. Part of the enzyme membrane arm which is embedded in the lipid bilayer and involved in proton translocation. This Varecia rubra (Red ruffed lemur) protein is NADH-ubiquinone oxidoreductase chain 4L (MT-ND4L).